Here is a 409-residue protein sequence, read N- to C-terminus: Argininosuccinate synthase (409 aa).

Residues 11–19 (AYSGGLDTS) and Ala-38 each bind ATP. Positions 91 and 96 each coordinate L-citrulline. Residue Gly-121 participates in ATP binding. Residues Thr-123, Asn-127, and Asp-128 each contribute to the L-aspartate site. An L-citrulline-binding site is contributed by Asn-127. Arg-131, Ser-182, Ser-191, Glu-267, and Tyr-279 together coordinate L-citrulline.

The protein belongs to the argininosuccinate synthase family. Type 1 subfamily. In terms of assembly, homotetramer.

It localises to the cytoplasm. The catalysed reaction is L-citrulline + L-aspartate + ATP = 2-(N(omega)-L-arginino)succinate + AMP + diphosphate + H(+). The protein operates within amino-acid biosynthesis; L-arginine biosynthesis; L-arginine from L-ornithine and carbamoyl phosphate: step 2/3. In Nitrobacter winogradskyi (strain ATCC 25391 / DSM 10237 / CIP 104748 / NCIMB 11846 / Nb-255), this protein is Argininosuccinate synthase.